A 198-amino-acid polypeptide reads, in one-letter code: Myb-related protein 340 (198 aa).

HTH myb-type domains lie at 10 to 62 (DVEV…LNYL) and 63 to 117 (RPDV…IQKH). 2 DNA-binding regions (H-T-H motif) span residues 38-62 (WNTIARSAGLKRTGKSCRLRWLNYL) and 90-113 (WSKIAKHLPGRTDNEIKNYWNRTR).

Expressed only in flowers.

The protein resides in the nucleus. In terms of biological role, transcription factor. This is Myb-related protein 340 from Antirrhinum majus (Garden snapdragon).